The primary structure comprises 347 residues: Terpene synthase 2 (347 aa).

Mg(2+)-binding residues include Asp-103, Asn-247, Ser-251, and Glu-255. The short motif at 103-107 (DDLLE) is the D(D/E)XX(D/E) motif element. The NSE motif signature appears at 247 to 255 (NDIFSLKKE). Positions 329-336 (WCSKSTRY) match the WxxxxxRY motif motif.

It belongs to the terpene synthase family. Mg(2+) is required as a cofactor.

In terms of biological role, terpene synthase that may be involved in the production of volatile terpenoids. Does not show detectable terpene products with either farnesyl diphosphate (FPP) or geranyl diphosphate (GPP). P.polycephalum has a unique biology and these volatile terpenoids could function in internal communication of P.polycephalum, to mark the territory that have been explored, or they may be involved in chemotaxis. The sequence is that of Terpene synthase 2 from Physarum polycephalum (Slime mold).